Here is a 161-residue protein sequence, read N- to C-terminus: Ribosomal RNA large subunit methyltransferase H (161 aa).

S-adenosyl-L-methionine is bound by residues L78, G110, and 129–134 (LGRMTF).

The protein belongs to the RNA methyltransferase RlmH family. Homodimer.

The protein resides in the cytoplasm. It carries out the reaction pseudouridine(1915) in 23S rRNA + S-adenosyl-L-methionine = N(3)-methylpseudouridine(1915) in 23S rRNA + S-adenosyl-L-homocysteine + H(+). Functionally, specifically methylates the pseudouridine at position 1915 (m3Psi1915) in 23S rRNA. The sequence is that of Ribosomal RNA large subunit methyltransferase H from Symbiobacterium thermophilum (strain DSM 24528 / JCM 14929 / IAM 14863 / T).